Here is a 296-residue protein sequence, read N- to C-terminus: MGHLAILFSIIAVLNIATAVASSDSIYLKGHRVGQDIDSLYRVYDNGTMYPVTFNEWLNDLTGMNDLATNNATILKRDSSDVSCVTETCQYVDYHVDDEGVITIDISTYRIPVEWDSGSAGNASYGVSKRDTKYETFCKKKICGINVSGFCNAYDFAVHAFDFGGSVYNPVSGITDRIKEATKRDKTECLGYELDHVRIDPAVDWSISISTWKQGSANCDTQASADSLKCAAQKALESEHNHQKTAFCIHLDNGGSFNLDIRLISELSFSKYNPWALPCPKYKGSNSWQVVSDCFQ.

A signal peptide spans 1-20 (MGHLAILFSIIAVLNIATAV). N-linked (GlcNAc...) asparagine glycosylation is found at Asn-46, Asn-71, Asn-122, and Asn-146.

This sequence to yeast YER076C.

Its function is as follows. Kills sensitive strains of yeast. The protein is Killer toxin KHR (KHR1) of Saccharomyces cerevisiae (Baker's yeast).